We begin with the raw amino-acid sequence, 182 residues long: Ribosome-recycling factor (182 aa).

It belongs to the RRF family.

Its subcellular location is the cytoplasm. Its function is as follows. Responsible for the release of ribosomes from messenger RNA at the termination of protein biosynthesis. May increase the efficiency of translation by recycling ribosomes from one round of translation to another. The protein is Ribosome-recycling factor of Cyanothece sp. (strain PCC 7425 / ATCC 29141).